A 295-amino-acid polypeptide reads, in one-letter code: Putative clathrin assembly protein At5g65370 (295 aa).

An ENTH domain is found at 26 to 169; the sequence is CSSVNAKTID…SIAEVLGITP (144 aa).

Its subcellular location is the membrane. The protein resides in the clathrin-coated pit. It localises to the golgi apparatus. It is found in the cytoplasmic vesicle. The protein localises to the clathrin-coated vesicle. The chain is Putative clathrin assembly protein At5g65370 from Arabidopsis thaliana (Mouse-ear cress).